Here is a 715-residue protein sequence, read N- to C-terminus: ATP-dependent zinc metalloprotease YME1L1 (715 aa).

The segment at 31 to 54 is disordered; the sequence is VSVNTSASPKQHRDTVAEHEAPSS. Basic and acidic residues predominate over residues 41-52; sequence QHRDTVAEHEAP. A helical transmembrane segment spans residues 238–258; it reads ILFVLLLFGIYGLLKNPFLSV. ATP contacts are provided by valine 283, threonine 325, glycine 326, lysine 327, threonine 328, and leucine 329. Residue histidine 541 participates in Zn(2+) binding. Glutamate 542 is an active-site residue. Zn(2+)-binding residues include histidine 545 and aspartate 619.

The protein in the N-terminal section; belongs to the AAA ATPase family. In the C-terminal section; belongs to the peptidase M41 family. Homohexamer; may also form heterohexamers. Exists in several complexes of 600-1100 kDa. Interacts with AFG1L. Requires Zn(2+) as cofactor. In terms of processing, proteolytically processed by mitochondrial processing peptidase (MPP) to generate the mature form. Degraded in an OMA1-dependent manner in response to oxidative stress.

The protein resides in the mitochondrion inner membrane. Its subcellular location is the mitochondrion. The enzyme catalyses ATP + H2O = ADP + phosphate + H(+). ATP-dependent metalloprotease that catalyzes the degradation of folded and unfolded proteins with a suitable degron sequence in the mitochondrial intermembrane region. Plays an important role in regulating mitochondrial morphology and function by cleaving OPA1 at position S2, giving rise to a form of OPA1 that promotes maintenance of normal mitochondrial structure and mitochondrial protein metabolism. Ensures cell proliferation, maintains normal cristae morphology and complex I respiration activity, promotes antiapoptotic activity and protects mitochondria from the accumulation of oxidatively damaged membrane proteins. Required to control the accumulation of nonassembled respiratory chain subunits (NDUFB6, OX4 and ND1). Involved in the mitochondrial adaptation in response to various signals, such as stress or developmental cues, by mediating degradation of mitochondrial proteins to rewire the mitochondrial proteome. Catalyzes degradation of mitochondrial proteins, such as translocases, lipid transfer proteins and metabolic enzymes in response to nutrient starvation in order to limit mitochondrial biogenesis: mechanistically, YME1L is activated by decreased phosphatidylethanolamine levels caused by LPIN1 activity in response to mTORC1 inhibition. Acts as a regulator of adult neural stem cell self-renewal by promoting mitochondrial proteome rewiring, preserving neural stem and progenitor cells self-renewal. Required for normal, constitutive degradation of PRELID1. Catalyzes the degradation of OMA1 in response to membrane depolarization. Mediates degradation of TIMM17A downstream of the integrated stress response (ISR). Catalyzes degradation of MICU1 when MICU1 is not assembled via an interchain disulfide. The protein is ATP-dependent zinc metalloprotease YME1L1 (Yme1l1) of Rattus norvegicus (Rat).